The primary structure comprises 192 residues: Ion-translocating oxidoreductase complex subunit A (192 aa).

6 helical membrane passes run 5–25 (LLLL…FLGL), 39–59 (IGMG…AYLV), 63–83 (ILTP…VIAV), 102–122 (LLGI…VALL), 134–154 (IIYG…FAAM), and 171–191 (SIAM…TGLV).

It belongs to the NqrDE/RnfAE family. In terms of assembly, the complex is composed of six subunits: RnfA, RnfB, RnfC, RnfD, RnfE and RnfG.

The protein resides in the cell inner membrane. In terms of biological role, part of a membrane-bound complex that couples electron transfer with translocation of ions across the membrane. The protein is Ion-translocating oxidoreductase complex subunit A of Vibrio atlanticus (strain LGP32) (Vibrio splendidus (strain Mel32)).